Consider the following 214-residue polypeptide: Nascent polypeptide-associated complex subunit alpha (214 aa).

Disordered regions lie at residues 1 to 57 and 119 to 179; these read MSNP…NEKK and ASAA…EDKD. The span at 22–38 shows a compositional bias: acidic residues; it reads AEDEGSDSSDSEGEGEV. Residues 52–117 form the NAC-A/B domain; sequence SRNEKKARKS…AKIEDLNSQA (66 aa). Positions 119-128 are enriched in low complexity; the sequence is ASAAAQLAAQ. A compositionally biased stretch (basic and acidic residues) spans 129-159; sequence ESHDHAGHDHSGHDHSHDHGKGKAVDTGDEK. Residues 160-171 show a composition bias toward acidic residues; the sequence is KEEEEDDTEEVD. The region spanning 175–214 is the UBA domain; sequence LEDKDIELVMTQASVSRNKAVKALKENDNDIVNSIMALSI.

It belongs to the NAC-alpha family. Part of the nascent polypeptide-associated complex (NAC), consisting of EGD2 and EGD1. NAC associates with ribosomes via EGD1.

The protein resides in the cytoplasm. The protein localises to the nucleus. Its function is as follows. Component of the nascent polypeptide-associated complex (NAC), a dynamic component of the ribosomal exit tunnel, protecting the emerging polypeptides from interaction with other cytoplasmic proteins to ensure appropriate nascent protein targeting. The NAC complex also promotes mitochondrial protein import by enhancing productive ribosome interactions with the outer mitochondrial membrane and blocks the inappropriate interaction of ribosomes translating non-secretory nascent polypeptides with translocation sites in the membrane of the endoplasmic reticulum. EGD2 may also be involved in transcription regulation. This Sclerotinia sclerotiorum (strain ATCC 18683 / 1980 / Ss-1) (White mold) protein is Nascent polypeptide-associated complex subunit alpha (egd2).